A 174-amino-acid chain; its full sequence is Small ribosomal subunit protein uS5 (174 aa).

An S5 DRBM domain is found at 19-82 (LREKMIAVNR…EQARRGMFKV (64 aa)).

The protein belongs to the universal ribosomal protein uS5 family. As to quaternary structure, part of the 30S ribosomal subunit. Contacts proteins S4 and S8.

Its function is as follows. With S4 and S12 plays an important role in translational accuracy. Located at the back of the 30S subunit body where it stabilizes the conformation of the head with respect to the body. This is Small ribosomal subunit protein uS5 from Bordetella bronchiseptica (strain ATCC BAA-588 / NCTC 13252 / RB50) (Alcaligenes bronchisepticus).